We begin with the raw amino-acid sequence, 251 residues long: 3-deoxy-manno-octulosonate cytidylyltransferase (251 aa).

The protein belongs to the KdsB family.

It localises to the cytoplasm. The catalysed reaction is 3-deoxy-alpha-D-manno-oct-2-ulosonate + CTP = CMP-3-deoxy-beta-D-manno-octulosonate + diphosphate. It participates in nucleotide-sugar biosynthesis; CMP-3-deoxy-D-manno-octulosonate biosynthesis; CMP-3-deoxy-D-manno-octulosonate from 3-deoxy-D-manno-octulosonate and CTP: step 1/1. It functions in the pathway bacterial outer membrane biogenesis; lipopolysaccharide biosynthesis. In terms of biological role, activates KDO (a required 8-carbon sugar) for incorporation into bacterial lipopolysaccharide in Gram-negative bacteria. This is 3-deoxy-manno-octulosonate cytidylyltransferase from Geotalea uraniireducens (strain Rf4) (Geobacter uraniireducens).